An 879-amino-acid chain; its full sequence is Pyruvate dehydrogenase phosphatase regulatory subunit, mitochondrial (879 aa).

Residues Met1 to Asn27 constitute a mitochondrion transit peptide.

Belongs to the GcvT family. Heterodimer of a catalytic (PDP1) and a regulatory (PDPR) subunit.

The protein localises to the mitochondrion matrix. Decreases the sensitivity of PDP1 to magnesium ions, and this inhibition is reversed by the polyamine spermine. This is Pyruvate dehydrogenase phosphatase regulatory subunit, mitochondrial (PDPR) from Homo sapiens (Human).